The primary structure comprises 334 residues: Anthranilate phosphoribosyltransferase (334 aa).

Residues Gly81, 84–85 (GD), Thr89, 91–94 (NIST), 109–117 (KHGSRSVSS), and Ala121 contribute to the 5-phospho-alpha-D-ribose 1-diphosphate site. Position 81 (Gly81) interacts with anthranilate. Residue Ser93 participates in Mg(2+) binding. Residue Arg167 participates in anthranilate binding. Mg(2+) is bound by residues Asp225 and Glu226.

Belongs to the anthranilate phosphoribosyltransferase family. In terms of assembly, homodimer. It depends on Mg(2+) as a cofactor.

It carries out the reaction N-(5-phospho-beta-D-ribosyl)anthranilate + diphosphate = 5-phospho-alpha-D-ribose 1-diphosphate + anthranilate. Its pathway is amino-acid biosynthesis; L-tryptophan biosynthesis; L-tryptophan from chorismate: step 2/5. Its function is as follows. Catalyzes the transfer of the phosphoribosyl group of 5-phosphorylribose-1-pyrophosphate (PRPP) to anthranilate to yield N-(5'-phosphoribosyl)-anthranilate (PRA). In Actinobacillus pleuropneumoniae serotype 5b (strain L20), this protein is Anthranilate phosphoribosyltransferase.